Consider the following 216-residue polypeptide: GTP cyclohydrolase 1 (216 aa).

Zn(2+)-binding residues include cysteine 108, histidine 111, and cysteine 179.

The protein belongs to the GTP cyclohydrolase I family. Toroid-shaped homodecamer, composed of two pentamers of five dimers.

The catalysed reaction is GTP + H2O = 7,8-dihydroneopterin 3'-triphosphate + formate + H(+). Its pathway is cofactor biosynthesis; 7,8-dihydroneopterin triphosphate biosynthesis; 7,8-dihydroneopterin triphosphate from GTP: step 1/1. The sequence is that of GTP cyclohydrolase 1 from Shewanella amazonensis (strain ATCC BAA-1098 / SB2B).